The sequence spans 178 residues: uncharacterized protein (178 aa).

5 helical membrane-spanning segments follow: residues 1 to 21 (MISI…YGGG), 47 to 67 (MLAL…AYVG), 75 to 95 (GFLI…IVLL), 117 to 137 (VIAV…IKAI), and 158 to 178 (MHPA…IPYL).

It belongs to the chromate ion transporter (CHR) (TC 2.A.51) family.

The protein localises to the cell membrane. This is an uncharacterized protein from Bacillus subtilis (strain 168).